A 582-amino-acid polypeptide reads, in one-letter code: ATP-dependent lipid A-core flippase (582 aa).

A run of 5 helical transmembrane segments spans residues tryptophan 25–alanine 45, valine 64–methionine 84, alanine 142–tryptophan 162, tryptophan 165–threonine 185, and valine 253–leucine 273. Residues valine 29–arginine 309 form the ABC transmembrane type-1 domain. The ABC transporter domain maps to isoleucine 342–methionine 577. Residue glycine 375–serine 382 coordinates ATP.

It belongs to the ABC transporter superfamily. Lipid exporter (TC 3.A.1.106) family. Homodimer.

Its subcellular location is the cell inner membrane. The catalysed reaction is ATP + H2O + lipid A-core oligosaccharideSide 1 = ADP + phosphate + lipid A-core oligosaccharideSide 2.. Involved in lipopolysaccharide (LPS) biosynthesis. Translocates lipid A-core from the inner to the outer leaflet of the inner membrane. Transmembrane domains (TMD) form a pore in the inner membrane and the ATP-binding domain (NBD) is responsible for energy generation. This Alcanivorax borkumensis (strain ATCC 700651 / DSM 11573 / NCIMB 13689 / SK2) protein is ATP-dependent lipid A-core flippase.